The sequence spans 210 residues: MAASVEQREDTIQVQGQALFFREARPGSGQAHFSVLLLHGIRFSSETWQNLGTLHQLAQAGYRAVAIDLPGLGRSKEAAAPAPIGELAPGSFLAAVVDALELGPPVVISPSLSGMYSLPFLTAPGSQLLGYVPVAPICTDKINAANYASVKTPALIVYGDQDPMGQTSFEHLKQLPNHRVLIMKGAGHPCYLDKPEEWHTGLLDFLQGLQ.

Alanine 2 bears the N-acetylalanine mark. Serine 91 is modified (phosphoserine). Active-site charge relay system residues include serine 111, aspartate 162, and histidine 188.

This sequence belongs to the AB hydrolase superfamily. ABHD14 family. In terms of assembly, may interact with TAF1.

It is found in the cytoplasm. It localises to the nucleus. It carries out the reaction L-lysyl-[protein] + acetyl-CoA = N(6)-acetyl-L-lysyl-[protein] + CoA + H(+). Its function is as follows. Acts as an atypical protein-lysine deacetylase in vitro. Catalyzes the deacetylation of lysine residues using CoA as substrate, generating acetyl-CoA and the free amine of protein-lysine residues. Additional experiments are however required to confirm the protein-lysine deacetylase activity in vivo. Has hydrolase activity towards various surrogate p-nitrophenyl (pNp) substrates, such as pNp-butyrate, pNp-acetate and pNp-octanoate in vitro, with a strong preference for pNp-acetate. May activate transcription. The sequence is that of Putative protein-lysine deacylase ABHD14B from Pongo abelii (Sumatran orangutan).